The primary structure comprises 528 residues: Chaperonin GroEL, chloroplastic (528 aa).

Residues 29–32 (TLGP), 86–90 (DGTTT), glycine 414, and aspartate 496 each bind ATP.

Belongs to the chaperonin (HSP60) family. Forms a cylinder of 14 subunits composed of two heptameric rings stacked back-to-back. Interacts with the co-chaperonin GroES.

It is found in the plastid. The protein localises to the chloroplast. The enzyme catalyses ATP + H2O + a folded polypeptide = ADP + phosphate + an unfolded polypeptide.. In terms of biological role, together with its co-chaperonin GroES, plays an essential role in assisting protein folding. The GroEL-GroES system forms a nano-cage that allows encapsulation of the non-native substrate proteins and provides a physical environment optimized to promote and accelerate protein folding. The polypeptide is Chaperonin GroEL, chloroplastic (Porphyra purpurea (Red seaweed)).